A 56-amino-acid polypeptide reads, in one-letter code: U-limacoditoxin(3)-Dv21 (56 aa).

The first 19 residues, 1–19 (MKKVIMLLLIFALFAYALS), serve as a signal peptide directing secretion. Cystine bridges form between cysteine 26/cysteine 41, cysteine 33/cysteine 46, and cysteine 40/cysteine 53.

This sequence belongs to the limacoditoxin-22 family. In terms of tissue distribution, expressed by the venom secretory cell of the spine. The spine is a cuticular structure containing a single large nucleated venom-secreting cell at its base. It is an independent unit capable of producing, storing and injecting venom. On the back of D.vulnerans caterpillars, spines are grouped together by 50 to 100 to form scoli, of which there are eight in D.vulnerans.

The protein resides in the secreted. Functionally, probable toxin. Shows a moderate antiparasitic activity against the major pathogenic nematode of ruminants (H.contortus, IC(50)=22.1 uM). Does not show insecticidal activities. Does not induce increase in intracellular calcium in mouse DRG neurons, suggesting that it does not induce pain. This is U-limacoditoxin(3)-Dv21 from Doratifera vulnerans (Mottled cup moth).